The chain runs to 496 residues: Pituitary adenylate cyclase-activating polypeptide type I receptor (496 aa).

The first 20 residues, 1–20, serve as a signal peptide directing secretion; it reads MARTLQLSLTALLLLPMAIA. At 21–152 the chain is on the extracellular side; the sequence is MHSDCIFKKE…SGDQDYYYLS (132 aa). Cystine bridges form between Cys34/Cys63, Cys54/Cys118, and Cys77/Cys134. Residues Asn48, Asn60, and Asn117 are each glycosylated (N-linked (GlcNAc...) asparagine). Residues 125 to 139 form an important for ADCYAP1/PACAP ligand binding and specificity region; it reads EPFPHYFDACGFDDY. An important for ligand binding and specificity region spans residues 125 to 139; sequence EPFPHYFDACGFDDY. A helical transmembrane segment spans residues 153-177; sequence VKALYTVGYSTSLVTLTTAMVILCR. The Cytoplasmic segment spans residues 178-187; the sequence is FRKLHCTRNF. Residues 188-208 form a helical membrane-spanning segment; the sequence is IHMNLFVSFMLRAISVFIKDW. Residues 209–223 are Extracellular-facing; the sequence is ILYAEQDSSHCFVST. A helical membrane pass occupies residues 224–249; that stretch reads VECKAVMVFFHYCVVSNYFWLFIEGL. Cys226 and Cys296 are oxidised to a cystine. Residues 250–267 are Cytoplasmic-facing; that stretch reads YLFTLLVETFFPERRYFY. A helical membrane pass occupies residues 268–290; sequence WYTIIGWGTPTVCVTVWAVLRLY. Residues 291 to 302 are Extracellular-facing; it reads FDDAGCWDMNDS. The helical transmembrane segment at 303–329 threads the bilayer; that stretch reads TALWWVIKGPVVGSIMVNFVLFIGIII. Residues 330–347 lie on the Cytoplasmic side of the membrane; it reads ILVQKLQSPDMGGNESSI. The chain crosses the membrane as a helical span at residues 348–402; it reads YFSCVQKCYCKPQRAQQHSCKMSELSTITLRLARSTLLLIPLFGIHYTVFAFSPE. Residues 403–407 are Extracellular-facing; that stretch reads NVSKR. A helical membrane pass occupies residues 408 to 431; that stretch reads ERLVFELGLGSFQGFVVAVLYCFL. Over 432–496 the chain is Cytoplasmic; the sequence is NGEVQAEIKR…SSLPADNLAT (65 aa). Ser462 and Ser475 each carry phosphoserine.

Belongs to the G-protein coupled receptor 2 family. In terms of assembly, interacts with maxadilan, a vasodilator peptide from Lutzomyia longipalpis saliva; the interaction results in ADCYAP1R1 activation.

It is found in the cell membrane. Its function is as follows. G protein-coupled receptor activated by the neuropeptide pituitary adenylate cyclase-activating polypeptide (ADCYAP1/PACAP). Binds both PACAP27 and PACAP38 bioactive peptides. Ligand binding causes a conformation change that triggers signaling via guanine nucleotide-binding proteins (G proteins) and modulates the activity of downstream effectors. Activates cAMP-dependent pathway. May regulate the release of adrenocorticotropin, luteinizing hormone, growth hormone, prolactin, epinephrine, and catecholamine. May play a role in spermatogenesis and sperm motility. Causes smooth muscle relaxation and secretion in the gastrointestinal tract. This is Pituitary adenylate cyclase-activating polypeptide type I receptor from Mus musculus (Mouse).